Here is a 335-residue protein sequence, read N- to C-terminus: Nucleoid-associated protein Pput_1012 (335 aa).

This sequence belongs to the YejK family.

Its subcellular location is the cytoplasm. The protein resides in the nucleoid. The chain is Nucleoid-associated protein Pput_1012 from Pseudomonas putida (strain ATCC 700007 / DSM 6899 / JCM 31910 / BCRC 17059 / LMG 24140 / F1).